The chain runs to 175 residues: Large ribosomal subunit protein uL6 (175 aa).

Belongs to the universal ribosomal protein uL6 family. In terms of assembly, part of the 50S ribosomal subunit.

Its function is as follows. This protein binds to the 23S rRNA, and is important in its secondary structure. It is located near the subunit interface in the base of the L7/L12 stalk, and near the tRNA binding site of the peptidyltransferase center. In Xylella fastidiosa (strain 9a5c), this protein is Large ribosomal subunit protein uL6.